Consider the following 115-residue polypeptide: Nitrogenase-stabilizing/protective protein NifW (115 aa).

Belongs to the NifW family. In terms of assembly, homotrimer; associates with NifD.

May protect the nitrogenase Fe-Mo protein from oxidative damage. The chain is Nitrogenase-stabilizing/protective protein NifW from Stutzerimonas stutzeri (strain A1501) (Pseudomonas stutzeri).